Reading from the N-terminus, the 363-residue chain is Phospho-N-acetylmuramoyl-pentapeptide-transferase (363 aa).

The next 10 membrane-spanning stretches (helical) occupy residues 27–47 (SGCA…PFIA), 76–96 (TMGG…WADL), 97–117 (TNGF…VGFA), 137–157 (LGCE…LTPP), 171–191 (VLLP…TGFG), 202–222 (GLAI…SYLV), 242–262 (LAVF…FNAP), 265–285 (AVFM…AVAV), 292–312 (VLCI…IQIF), and 340–360 (KIVI…LATL).

The protein belongs to the glycosyltransferase 4 family. MraY subfamily. Mg(2+) serves as cofactor.

It is found in the cell inner membrane. The enzyme catalyses UDP-N-acetyl-alpha-D-muramoyl-L-alanyl-gamma-D-glutamyl-meso-2,6-diaminopimeloyl-D-alanyl-D-alanine + di-trans,octa-cis-undecaprenyl phosphate = di-trans,octa-cis-undecaprenyl diphospho-N-acetyl-alpha-D-muramoyl-L-alanyl-D-glutamyl-meso-2,6-diaminopimeloyl-D-alanyl-D-alanine + UMP. It functions in the pathway cell wall biogenesis; peptidoglycan biosynthesis. Functionally, catalyzes the initial step of the lipid cycle reactions in the biosynthesis of the cell wall peptidoglycan: transfers peptidoglycan precursor phospho-MurNAc-pentapeptide from UDP-MurNAc-pentapeptide onto the lipid carrier undecaprenyl phosphate, yielding undecaprenyl-pyrophosphoryl-MurNAc-pentapeptide, known as lipid I. The polypeptide is Phospho-N-acetylmuramoyl-pentapeptide-transferase (Gluconobacter oxydans (strain 621H) (Gluconobacter suboxydans)).